The sequence spans 663 residues: Zeaxanthin epoxidase, chloroplastic (663 aa).

The N-terminal 50 residues, 1-50 (MYSTVFYTSVHPSTSAFSRKQLPLLISKDFPTELYHSLPCSRSLENGQIK), are a transit peptide targeting the chloroplast. FAD is bound by residues 81-109 (KVLV…LVFE) and 359-372 (TFSW…LLGD). One can recognise an FHA domain in the interval 547–611 (LVLSRDENMP…HGTWITDNEG (65 aa)).

Requires FAD as cofactor. As to expression, higher expression in leaves than in roots.

The protein localises to the plastid. Its subcellular location is the chloroplast membrane. The protein resides in the chloroplast thylakoid membrane. It carries out the reaction all-trans-zeaxanthin + 4 reduced [2Fe-2S]-[ferredoxin] + 2 O2 + 4 H(+) = all-trans-violaxanthin + 4 oxidized [2Fe-2S]-[ferredoxin] + 2 H2O. The protein operates within plant hormone biosynthesis; abscisate biosynthesis. Functionally, converts zeaxanthin into antheraxanthin and subsequently violaxanthin. Involved in the epoxidation of zeaxanthin. Plays an important role in resistance to stresses, seed development and dormancy. The polypeptide is Zeaxanthin epoxidase, chloroplastic (ABA2) (Nicotiana plumbaginifolia (Leadwort-leaved tobacco)).